The chain runs to 168 residues: NADH dehydrogenase [ubiquinone] 1 alpha subcomplex assembly factor 2 (168 aa).

Residues 108–118 (KEKLLQEESNK) show a composition bias toward basic and acidic residues. Residues 108-168 (KEKLLQEESN…MPHGDKGHSQ (61 aa)) are disordered. Ser-133 carries the phosphoserine modification. A compositionally biased stretch (polar residues) spans 144–155 (ESPTSTGKTFQP).

Belongs to the complex I NDUFA12 subunit family. Interacts with ARMC9.

Its subcellular location is the mitochondrion. Its function is as follows. Acts as a molecular chaperone for mitochondrial complex I assembly. Complex I functions in the transfer of electrons from NADH to the respiratory chain. The immediate electron acceptor for the enzyme is believed to be ubiquinone. Is involved in the initial steps of cilia formation, including removal of CP110 from the mother centrioles, docking of membrane vesicles to the mother centrioles, and establishment of the transition zone. The polypeptide is NADH dehydrogenase [ubiquinone] 1 alpha subcomplex assembly factor 2 (NDUFAF2) (Bos taurus (Bovine)).